The sequence spans 201 residues: UPF0301 protein RHA1_ro03630 (201 aa).

It belongs to the UPF0301 (AlgH) family.

The protein is UPF0301 protein RHA1_ro03630 of Rhodococcus jostii (strain RHA1).